Reading from the N-terminus, the 129-residue chain is Glycerol-3-phosphate cytidylyltransferase (129 aa).

Residues 9–10 (TF) and 14–17 (HYGH) contribute to the CTP site. Residue Lys44 participates in substrate binding. Residue Lys46 participates in CTP binding. A substrate-binding site is contributed by Lys77. Residue 113 to 120 (RTDGISTT) participates in CTP binding.

Belongs to the cytidylyltransferase family. In terms of assembly, homodimer.

The protein localises to the cytoplasm. It carries out the reaction sn-glycerol 3-phosphate + CTP + H(+) = CDP-glycerol + diphosphate. It functions in the pathway cell wall biogenesis; poly(ribitol phosphate) teichoic acid biosynthesis. In terms of biological role, catalyzes the transfer of the cytidylyl group of CTP to sn-glycerol 3-phosphate so the activated glycerol 3-phosphate can be used for teichoic acid synthesis, via incorporation into both the linkage unit by TarB and TarF. The sequence is that of Glycerol-3-phosphate cytidylyltransferase (tarD) from Bacillus spizizenii (strain ATCC 23059 / NRRL B-14472 / W23) (Bacillus subtilis subsp. spizizenii).